Reading from the N-terminus, the 373-residue chain is Erythronate-4-phosphate dehydrogenase (373 aa).

Positions 45 and 66 each coordinate substrate. NAD(+) contacts are provided by Asp146 and Thr175. Residue Arg208 is part of the active site. NAD(+) is bound at residue Asp232. Glu237 is an active-site residue. His254 acts as the Proton donor in catalysis. Residue Gly257 participates in NAD(+) binding. A substrate-binding site is contributed by Tyr258.

Belongs to the D-isomer specific 2-hydroxyacid dehydrogenase family. PdxB subfamily. As to quaternary structure, homodimer.

It localises to the cytoplasm. The enzyme catalyses 4-phospho-D-erythronate + NAD(+) = (R)-3-hydroxy-2-oxo-4-phosphooxybutanoate + NADH + H(+). Its pathway is cofactor biosynthesis; pyridoxine 5'-phosphate biosynthesis; pyridoxine 5'-phosphate from D-erythrose 4-phosphate: step 2/5. In terms of biological role, catalyzes the oxidation of erythronate-4-phosphate to 3-hydroxy-2-oxo-4-phosphonooxybutanoate. This Serratia proteamaculans (strain 568) protein is Erythronate-4-phosphate dehydrogenase.